The sequence spans 317 residues: Olfactory receptor 5K17 (317 aa).

The Extracellular segment spans residues 1–28 (MMKANHSLTVEFILIGFSDHTDLKTLLF). Residue Asn5 is glycosylated (N-linked (GlcNAc...) asparagine). Residues 29 to 49 (LLFSAIYLVTIVGNLGLVALI) form a helical membrane-spanning segment. The Cytoplasmic segment spans residues 50-56 (YMEPRLH). A helical transmembrane segment spans residues 57-77 (TPMYIFLGNLALMDSCCSCAI). The Extracellular portion of the chain corresponds to 78 to 93 (TPKMLENFFSVDRRIS). Residues 94–114 (LYECMVQFYFLCLAETADCFL) traverse the membrane as a helical segment. Cys97 and Cys189 form a disulfide bridge. Topologically, residues 115–144 (LAAMAYDRYVAICNPLQYHTMMSKKLSIQM) are cytoplasmic. A helical membrane pass occupies residues 145–165 (SIGTFIASNLHSLIHTGCLLR). Over 166 to 198 (LNFCKSRRIDHFFCDILPLYKLSCTDPFINELM) the chain is Extracellular. The helical transmembrane segment at 199-219 (LYIFSMPIQVFTITTVLVSYS) threads the bilayer. At 220 to 239 (CILLTVFKMKSKDGRGKAFS) the chain is on the cytoplasmic side. Residues 240 to 259 (TCASHFFSVSIFYICLLMYI) traverse the membrane as a helical segment. The Extracellular portion of the chain corresponds to 260 to 268 (GPSKNSNKD). The helical transmembrane segment at 269–289 (IPVGVFYTIVIPLLNPFIYSL) threads the bilayer. Residues 290-317 (RNKEVVNAVKKVMKTHSIFKNSSASIAH) lie on the Cytoplasmic side of the membrane.

This sequence belongs to the G-protein coupled receptor 1 family.

Its subcellular location is the cell membrane. Functionally, potential odorant receptor. In Mus musculus (Mouse), this protein is Olfactory receptor 5K17.